Here is a 510-residue protein sequence, read N- to C-terminus: Chromosomal replication initiator protein DnaA (510 aa).

The tract at residues 1 to 87 (MSVELWQQCV…IGSRRSSAPR (87 aa)) is domain I, interacts with DnaA modulators. Residues 87–173 (RAAPNAPVSA…QVEGALKHTS (87 aa)) are domain II. The interval 140-160 (DSFDAMAEPASAPASSGRAEQ) is disordered. The span at 144–157 (AMAEPASAPASSGR) shows a compositional bias: low complexity. Residues 174-390 (YLNRTFTFDT…GALKRVIAHS (217 aa)) are domain III, AAA+ region. ATP contacts are provided by Gly-218, Gly-220, Lys-221, and Thr-222. The interval 391–510 (HFMGRDITIE…YKNLLRTLTT (120 aa)) is domain IV, binds dsDNA.

This sequence belongs to the DnaA family. As to quaternary structure, oligomerizes as a right-handed, spiral filament on DNA at oriC.

Its subcellular location is the cytoplasm. In terms of biological role, plays an essential role in the initiation and regulation of chromosomal replication. ATP-DnaA binds to the origin of replication (oriC) to initiate formation of the DNA replication initiation complex once per cell cycle. Binds the DnaA box (a 9 base pair repeat at the origin) and separates the double-stranded (ds)DNA. Forms a right-handed helical filament on oriC DNA; dsDNA binds to the exterior of the filament while single-stranded (ss)DNA is stabiized in the filament's interior. The ATP-DnaA-oriC complex binds and stabilizes one strand of the AT-rich DNA unwinding element (DUE), permitting loading of DNA polymerase. After initiation quickly degrades to an ADP-DnaA complex that is not apt for DNA replication. Binds acidic phospholipids. The chain is Chromosomal replication initiator protein DnaA from Pseudomonas putida (strain GB-1).